We begin with the raw amino-acid sequence, 197 residues long: MEAFRTHTGIGVPLRRSNVDTDQIIPAVYLKRVTRTGFEDGLFAAWRNDPSFVLNLPPFDRGSVLVAGPDFGTGSSREHAVWALMDYGFRVVISSRFADIFRGNAGKAGLLAAEVNQNDVELIWKLIEQNPGLEITVNLQDRNIIAGTVMVPFTIDDYTAWRLLEGLDDIGLTLRKQSEIEDYERRRPSWKPRTLPV.

Belongs to the LeuD family. LeuD type 1 subfamily. As to quaternary structure, heterodimer of LeuC and LeuD.

The enzyme catalyses (2R,3S)-3-isopropylmalate = (2S)-2-isopropylmalate. Its pathway is amino-acid biosynthesis; L-leucine biosynthesis; L-leucine from 3-methyl-2-oxobutanoate: step 2/4. Functionally, catalyzes the isomerization between 2-isopropylmalate and 3-isopropylmalate, via the formation of 2-isopropylmaleate. The protein is 3-isopropylmalate dehydratase small subunit of Mycobacterium sp. (strain JLS).